A 244-amino-acid chain; its full sequence is MVRILAVIPARYASERLPGKVLLPIAGRPMLQWVYEATIASNVFDQVAIATEDPRVVEAAAAFGAEAILTSADLASGTDRVAEASLHFPDCKVIANVQGDQPFVTPGLLQALVSPYRAGELPEMTTVGGPYDPAQDADDPNTVKVVCDQRGNALYFSRSAIPYPRTVVHDLPVYHHFGLYAFRRDFLAQYRQLPPTPLERCESLEQLRVLEQGYRIRVVPCADKVIEVNTADDLERANAWASQR.

The protein belongs to the KdsB family.

The protein localises to the cytoplasm. The catalysed reaction is 3-deoxy-alpha-D-manno-oct-2-ulosonate + CTP = CMP-3-deoxy-beta-D-manno-octulosonate + diphosphate. Its pathway is nucleotide-sugar biosynthesis; CMP-3-deoxy-D-manno-octulosonate biosynthesis; CMP-3-deoxy-D-manno-octulosonate from 3-deoxy-D-manno-octulosonate and CTP: step 1/1. It participates in bacterial outer membrane biogenesis; lipopolysaccharide biosynthesis. Its function is as follows. Activates KDO (a required 8-carbon sugar) for incorporation into bacterial lipopolysaccharide in Gram-negative bacteria. This is 3-deoxy-manno-octulosonate cytidylyltransferase from Synechococcus elongatus (strain ATCC 33912 / PCC 7942 / FACHB-805) (Anacystis nidulans R2).